The sequence spans 131 residues: Large ribosomal subunit protein bL21 (131 aa).

The tract at residues valine 111–glutamate 131 is disordered.

It belongs to the bacterial ribosomal protein bL21 family. Part of the 50S ribosomal subunit. Contacts protein L20.

Functionally, this protein binds to 23S rRNA in the presence of protein L20. The polypeptide is Large ribosomal subunit protein bL21 (Cereibacter sphaeroides (strain ATCC 17029 / ATH 2.4.9) (Rhodobacter sphaeroides)).